Consider the following 382-residue polypeptide: ATP phosphoribosyltransferase regulatory subunit (382 aa).

This sequence belongs to the class-II aminoacyl-tRNA synthetase family. HisZ subfamily. In terms of assembly, heteromultimer composed of HisG and HisZ subunits.

The protein resides in the cytoplasm. Its pathway is amino-acid biosynthesis; L-histidine biosynthesis; L-histidine from 5-phospho-alpha-D-ribose 1-diphosphate: step 1/9. Required for the first step of histidine biosynthesis. May allow the feedback regulation of ATP phosphoribosyltransferase activity by histidine. This is ATP phosphoribosyltransferase regulatory subunit from Burkholderia pseudomallei (strain 668).